The following is a 99-amino-acid chain: Acylphosphatase-1 (99 aa).

The residue at position 2 (A2) is an N-acetylalanine. Positions 9-99 (SVDYEVSGRV…LEHTDFQIRK (91 aa)) constitute an Acylphosphatase-like domain. Active-site residues include R24 and N42.

The protein belongs to the acylphosphatase family. As to expression, organ-common type isozyme is found in many different tissues.

It catalyses the reaction an acyl phosphate + H2O = a carboxylate + phosphate + H(+). In Gallus gallus (Chicken), this protein is Acylphosphatase-1 (ACYP1).